A 418-amino-acid chain; its full sequence is Voltage-gated ClC-type chloride channel ClcB (418 aa).

Residues 1 to 4 (MFRR) lie on the Cytoplasmic side of the membrane. The chain crosses the membrane as a helical span at residues 5–25 (LLIATVVGILAAFAVAGFRHA). The Periplasmic segment spans residues 26 to 53 (MLLLEWLFLNNDSGSLVNAATNLSPWRR). A helical membrane pass occupies residues 54–74 (LLTPALGGLAAGLLLMGWQKF). Over 75–145 (TQQRPHAPTD…QRFTPRQEWK (71 aa)) the chain is Cytoplasmic. Residues 146–166 (LWIACGAAAGMAAAYRAPLAG) traverse the membrane as a helical segment. The Periplasmic portion of the chain corresponds to 167-177 (SLFIAEVLFGT). The chain crosses the membrane as a helical span at residues 178–200 (MMLASLGPVIISAVVALLVSNLI). The Cytoplasmic portion of the chain corresponds to 201–221 (NHSDALLYSVQLSVTVQARDY). Residues 222–242 (ALIISTGVLAGLCGPLLLTLM) form a helical membrane-spanning segment. Residues 243–257 (NACHRGFVSLKLAPP) are Periplasmic-facing. A helical membrane pass occupies residues 258 to 278 (WQLALGGLIVGLLSLFTPAVW). Residues 279–290 (GNGYSTVQSFLT) are Cytoplasmic-facing. Residues 291 to 311 (APPLLMIIAGIFLCKLCAVLA) traverse the membrane as a helical segment. Over 312-315 (SSGS) the chain is Periplasmic. The helical transmembrane segment at 316-336 (GAPGGVFTPTLFIGLAIGMLY) threads the bilayer. Residues 337–351 (GRSLGLWFPDGEEIT) are Cytoplasmic-facing. A helical membrane pass occupies residues 352-372 (LLLGLTGMATLLAATTHAPIM). Over 373 to 379 (STLMICE) the chain is Periplasmic. A helical transmembrane segment spans residues 380-400 (MTGEYQLLPGLLIACVIASVI). Over 401–418 (SRTLHRDSIYRQHTAQHS) the chain is Cytoplasmic.

The protein belongs to the chloride channel (TC 2.A.49) family. ClcB subfamily.

It is found in the cell inner membrane. Probably acts as an electrical shunt for an outwardly-directed proton pump that is linked to amino acid decarboxylation, as part of the extreme acid resistance (XAR) response. In Escherichia coli O157:H7, this protein is Voltage-gated ClC-type chloride channel ClcB (clcB).